The primary structure comprises 259 residues: UPF0246 protein RD1_0358 (259 aa).

Belongs to the UPF0246 family.

In Roseobacter denitrificans (strain ATCC 33942 / OCh 114) (Erythrobacter sp. (strain OCh 114)), this protein is UPF0246 protein RD1_0358.